Consider the following 444-residue polypeptide: ATP-dependent protease ATPase subunit HslU (444 aa).

ATP contacts are provided by residues Ile18, 60-65, Asp256, Glu321, and Arg393; that span reads GVGKTE.

This sequence belongs to the ClpX chaperone family. HslU subfamily. In terms of assembly, a double ring-shaped homohexamer of HslV is capped on each side by a ring-shaped HslU homohexamer. The assembly of the HslU/HslV complex is dependent on binding of ATP.

It is found in the cytoplasm. In terms of biological role, ATPase subunit of a proteasome-like degradation complex; this subunit has chaperone activity. The binding of ATP and its subsequent hydrolysis by HslU are essential for unfolding of protein substrates subsequently hydrolyzed by HslV. HslU recognizes the N-terminal part of its protein substrates and unfolds these before they are guided to HslV for hydrolysis. This Buchnera aphidicola subsp. Baizongia pistaciae (strain Bp) protein is ATP-dependent protease ATPase subunit HslU.